The sequence spans 337 residues: MANRGARHARTEDSDNTINYVQCDGLAVMKMVKHCHEESSNMDLAQGALLGLVVDKCLEITNCFPFPKSGDETMDEEMYQLTVMRRLRRVNVDHLHVGWYQSSDVGNSLSLALLESQYHYQTSIEESVVVVYDTQKSSRGFLCLKAYRLTPQAIQMYKDGDFTPEAFRTLKVGYESLFAEIPIVIKNSPLTNIMMSELNELLPEDKGHNFLDLGTASVLENHMRSLIERVDELYQEAVRYNKYQQVVFKQDTEKHRALAKLAAENAVRTSKGEPTVPEEEVIKQFRPMPVPARLTATITSGQINTHAQHIAQFCSQSLAKLFITESLQNAKETKEIK.

In terms of domain architecture, MPN spans Val-21 to Ala-153.

The protein belongs to the eIF-3 subunit H family. In terms of assembly, component of the eukaryotic translation initiation factor 3 (eIF-3) complex. The eIF-3 complex interacts with pix. Interacts with mxt.

It is found in the cytoplasm. Component of the eukaryotic translation initiation factor 3 (eIF-3) complex, which is involved in protein synthesis of a specialized repertoire of mRNAs and, together with other initiation factors, stimulates binding of mRNA and methionyl-tRNAi to the 40S ribosome. The eIF-3 complex specifically targets and initiates translation of a subset of mRNAs involved in cell proliferation. The protein is Eukaryotic translation initiation factor 3 subunit H of Drosophila virilis (Fruit fly).